The chain runs to 149 residues: uncharacterized protein (149 aa).

A helical transmembrane segment spans residues 12–31 (FKNLVIGAVSGVAAAYFLST).

The protein localises to the membrane. This is an uncharacterized protein from Streptococcus pyogenes serotype M6 (strain ATCC BAA-946 / MGAS10394).